Reading from the N-terminus, the 435-residue chain is Putative GMP synthase [glutamine-hydrolyzing] 2 (435 aa).

The Glutamine amidotransferase type-1; truncated domain occupies 1-120; the sequence is MKQDMIVILD…VFDTCQAEAN (120 aa). A GMPS ATP-PPase domain is found at 121–310; the sequence is WNMANFVNDQ…LGLPYEMVYR (190 aa). 148–154 is a binding site for ATP; the sequence is SGGVDSS.

As to quaternary structure, homodimer.

It catalyses the reaction XMP + L-glutamine + ATP + H2O = GMP + L-glutamate + AMP + diphosphate + 2 H(+). It functions in the pathway purine metabolism; GMP biosynthesis; GMP from XMP (L-Gln route): step 1/1. Catalyzes the synthesis of GMP from XMP. This is Putative GMP synthase [glutamine-hydrolyzing] 2 (guaA2) from Bacteroides thetaiotaomicron (strain ATCC 29148 / DSM 2079 / JCM 5827 / CCUG 10774 / NCTC 10582 / VPI-5482 / E50).